The sequence spans 670 residues: MGDLEKGAATHGAGCFAKIKVFLMALTCAYVSKSLSGTFMSSMLTQIERQFGIPTAIVGFINGSFEIGNLLLIIFVSYFGMKLHRPIVIGVGCAVMGLGCFIISLPHFLMGRYEYETTILPTSNLSSNSFLCMENQTQTLNPAQDPAECVKEVKSLMWIYVLVGNIIRGIGETPIMPLGVSYIENFAKSENSPLYIGILETGKMIGPIFGLLLGSFCASIYVDTGSVNTDDLTITPTDIRWVGAWWIGFLVCAGVNILISIPFFFFPKTLPKEGLQENVDGTENAKEESTEKRPRKKNRGITKDFFPFLKSPVLQPDLHAVHPYKVLQVNAFNIYFSFLPKYLENQYGKSTAEVIFLMGVYNLPAICIGYLIAGFMMKKFKITVKTAAFLAFCLSLSEYSFGFCNFLITCDNVPVAGLTNSYERDQKPLYLENNVLADCNTRCSCLTKTWDPVCGDNGLAYMSACLAGCEKSVGTGTNMVFHNCSCIQSPGNSSAVLGLCNKGPECTNKLQYLLILSGFLSILYSFAAIPGYMVFLRCIKSEEKSLGIGIHAFCIRVFAGIPAPIYFGALIDRTCLHWGTQKCGAPGACRMYDINSFRRIYLGMSAALRGSSYLPAFVIVILTRKFSLPGKINSSEMEIAEMKLTEKESQCTDVHRNPKFKNDGELKTKL.

At 1 to 20 (MGDLEKGAATHGAGCFAKIK) the chain is on the cytoplasmic side. The helical transmembrane segment at 21–40 (VFLMALTCAYVSKSLSGTFM) threads the bilayer. Over 41-59 (SSMLTQIERQFGIPTAIVG) the chain is Extracellular. The chain crosses the membrane as a helical span at residues 60–80 (FINGSFEIGNLLLIIFVSYFG). Residues 81–86 (MKLHRP) lie on the Cytoplasmic side of the membrane. A helical membrane pass occupies residues 87–111 (IVIGVGCAVMGLGCFIISLPHFLMG). At 112–155 (RYEYETTILPTSNLSSNSFLCMENQTQTLNPAQDPAECVKEVKS) the chain is on the extracellular side. N-linked (GlcNAc...) asparagine glycosylation is found at Asn-124 and Asn-135. Residues 156 to 184 (LMWIYVLVGNIIRGIGETPIMPLGVSYIE) form a helical membrane-spanning segment. Topologically, residues 185–203 (NFAKSENSPLYIGILETGK) are cytoplasmic. A helical membrane pass occupies residues 204–224 (MIGPIFGLLLGSFCASIYVDT). At 225 to 242 (GSVNTDDLTITPTDIRWV) the chain is on the extracellular side. A helical transmembrane segment spans residues 243–267 (GAWWIGFLVCAGVNILISIPFFFFP). The Cytoplasmic portion of the chain corresponds to 268 to 311 (KTLPKEGLQENVDGTENAKEESTEKRPRKKNRGITKDFFPFLKS). The interval 277-296 (ENVDGTENAKEESTEKRPRK) is disordered. Residues 283-292 (ENAKEESTEK) show a composition bias toward basic and acidic residues. The chain crosses the membrane as a helical span at residues 312–333 (PVLQPDLHAVHPYKVLQVNAFN). Over 334-353 (IYFSFLPKYLENQYGKSTAE) the chain is Extracellular. A helical membrane pass occupies residues 354 to 377 (VIFLMGVYNLPAICIGYLIAGFMM). Topologically, residues 378–381 (KKFK) are cytoplasmic. Residues 382–405 (ITVKTAAFLAFCLSLSEYSFGFCN) form a helical membrane-spanning segment. At 406–513 (FLITCDNVPV…PECTNKLQYL (108 aa)) the chain is on the extracellular side. Residues 433 to 488 (NNVLADCNTRCSCLTKTWDPVCGDNGLAYMSACLAGCEKSVGTGTNMVFHNCSCIQ) enclose the Kazal-like domain. Disulfide bonds link Cys-439/Cys-469, Cys-445/Cys-465, and Cys-454/Cys-486. Residues Asn-483 and Asn-492 are each glycosylated (N-linked (GlcNAc...) asparagine). Residues 514-536 (LILSGFLSILYSFAAIPGYMVFL) traverse the membrane as a helical segment. Residues 537–545 (RCIKSEEKS) lie on the Cytoplasmic side of the membrane. Residues 546–571 (LGIGIHAFCIRVFAGIPAPIYFGALI) traverse the membrane as a helical segment. The Extracellular segment spans residues 572 to 605 (DRTCLHWGTQKCGAPGACRMYDINSFRRIYLGMS). Residues 606–623 (AALRGSSYLPAFVIVILT) form a helical membrane-spanning segment. Over 624–670 (RKFSLPGKINSSEMEIAEMKLTEKESQCTDVHRNPKFKNDGELKTKL) the chain is Cytoplasmic.

The protein belongs to the organo anion transporter (TC 2.A.60) family. All isoforms are detected in kidney, and many are kidney specific. Isoforms 2 and 13 are also detected in liver. Isoforms 4 and 9/K4 are ubiquitous, but isoform 9/K13 is kidney specific. Isoforms 5 and 14 are detected in all tissues tested, with the exception of pancreas and spleen. Isoforms 11 and 15 are detected in kidney, pancreas and testis. Isoform 7 is detected in kidney, liver, testis and spleen.

The protein localises to the cell membrane. In terms of biological role, mediates the Na(+)-independent transport of organic anions such as methotrexate, taurocholate, folate and prostaglandin E2. May contribute to renal secretion and/or reabsorption of hydrophobic anionic compounds. Mediates renal clearance of methotrexate from the blood. The protein is Solute carrier organic anion transporter family member 1A3 (Slco1a3) of Rattus norvegicus (Rat).